The chain runs to 205 residues: SREBP regulating gene protein (205 aa).

Over 1–16 (MVPCGAVLWRRLLRKR) the chain is Cytoplasmic. Residues 17 to 35 (WVLGVVFGLSLVYFLSSTF) form a helical membrane-spanning segment. Over 36–205 (KQEERTVRDR…GEYPPELLPV (170 aa)) the chain is Lumenal. The N-linked (GlcNAc...) asparagine glycan is linked to asparagine 67.

It belongs to the SPRING family.

The protein resides in the golgi apparatus membrane. Positively regulates hepatic SREBP signaling pathway by modulating the proper localization of SCAP (SREBP cleavage-activating protein) to the endoplasmic reticulum, thereby controlling the level of functional SCAP. This chain is SREBP regulating gene protein, found in Gallus gallus (Chicken).